Consider the following 404-residue polypeptide: uncharacterized protein (404 aa).

This is an uncharacterized protein from Ostreid herpesvirus 1 (isolate France) (OsHV-1).